Consider the following 182-residue polypeptide: Ribosome maturation factor RimM (182 aa).

Residues 101–182 (VDEYYWSDLK…RIYVNWGVDY (82 aa)) form the PRC barrel domain.

Belongs to the RimM family. In terms of assembly, binds ribosomal protein uS19.

Its subcellular location is the cytoplasm. In terms of biological role, an accessory protein needed during the final step in the assembly of 30S ribosomal subunit, possibly for assembly of the head region. Essential for efficient processing of 16S rRNA. May be needed both before and after RbfA during the maturation of 16S rRNA. It has affinity for free ribosomal 30S subunits but not for 70S ribosomes. The chain is Ribosome maturation factor RimM from Acinetobacter baylyi (strain ATCC 33305 / BD413 / ADP1).